We begin with the raw amino-acid sequence, 37 residues long: Cytochrome b6-f complex subunit 5 (37 aa).

Residues 5 to 25 (FLFGIVLGLIPITLTGLFVTA) traverse the membrane as a helical segment.

It belongs to the PetG family. As to quaternary structure, the 4 large subunits of the cytochrome b6-f complex are cytochrome b6, subunit IV (17 kDa polypeptide, PetD), cytochrome f and the Rieske protein, while the 4 small subunits are PetG, PetL, PetM and PetN. The complex functions as a dimer.

Its subcellular location is the plastid. The protein localises to the chloroplast thylakoid membrane. Its function is as follows. Component of the cytochrome b6-f complex, which mediates electron transfer between photosystem II (PSII) and photosystem I (PSI), cyclic electron flow around PSI, and state transitions. PetG is required for either the stability or assembly of the cytochrome b6-f complex. The sequence is that of Cytochrome b6-f complex subunit 5 from Phalaenopsis aphrodite subsp. formosana (Moth orchid).